A 379-amino-acid chain; its full sequence is ATPase ASNA1 homolog (379 aa).

Residues Met1–Tyr20 are disordered. Positions Asn7–Asp18 are enriched in low complexity. Residue Lys46 to Thr53 coordinates ATP. Residue Asp75 is part of the active site. Positions 246 and 273 each coordinate ATP.

Belongs to the arsA ATPase family. In terms of assembly, homodimer.

The protein resides in the cytoplasm. Its subcellular location is the endoplasmic reticulum. Its function is as follows. ATPase required for the post-translational delivery of tail-anchored (TA) proteins to the endoplasmic reticulum. Recognizes and selectively binds the transmembrane domain of TA proteins in the cytosol. This complex then targets to the endoplasmic reticulum by membrane-bound receptors, where the tail-anchored protein is released for insertion. This process is regulated by ATP binding and hydrolysis. ATP binding drives the homodimer towards the closed dimer state, facilitating recognition of newly synthesized TA membrane proteins. ATP hydrolysis is required for insertion. Subsequently, the homodimer reverts towards the open dimer state, lowering its affinity for the membrane-bound receptor, and returning it to the cytosol to initiate a new round of targeting. The sequence is that of ATPase ASNA1 homolog from Plasmodium falciparum (isolate 3D7).